Consider the following 345-residue polypeptide: UPF0324 membrane protein RB0971 (345 aa).

The next 10 membrane-spanning stretches (helical) occupy residues 13–32 (SLSVVLSTYGPGLLVTAAVA), 42–61 (YGAPAMLMALLLGIAFHFLA), 93–115 (LLIGLGGGTILLLVSAIVATILF), 130–152 (ALLTSGAVAICGASAAMAIAAVL), 161–183 (NLIFTVLSVTVLSTLAMIGYPIV), 193–215 (ATGIFFGGTIHDVAQVVGAGFSV), 228–247 (LIRVTMLAPVVLIFSLVLRS), 262–284 (VPGFVLAFLVLAGFNSAGLVPVL), 291–310 (AISRWALLAGIVAVGMKTSL), and 320–342 (AVALVVAETLFIAVFILAGMYYL).

The protein belongs to the UPF0324 family.

It is found in the cell membrane. The protein is UPF0324 membrane protein RB0971 of Rhizobium meliloti (strain 1021) (Ensifer meliloti).